An 869-amino-acid chain; its full sequence is MQKLGLSGLRGLEGFRSLAGSTSTAAKAPNPKPSSDIGGSTYGSFANLKITAEKLVKEQASVKTDLEMTHTKLRRATEQINLLEAKLQQAVNENAKLKVKQTEDSKLWQGLDSKVSSTKTLCNQLTETLQQLASQTERAEEDKKFFEEILGKNSKAFEEFNCLLHDSSIKLECAEQMIISGKQEMLRIKQEKEEMDQSYKEQLYASDTTIREKNSLIKQLEDSIEQNKARLLYVDSRLECMEQELKLKEDVCICLKENLASTESEKNDLKLRNEGYTLEVQKLSKDNKELNELLSGFTVKVTELDKEHTSISSHVTQLISSFERYDGKVHEEKMLMIKSAKDKFEHLQNQYVNLISENNALQTEIEELKSRIIELQKTQEIVMVQHVEECQVAEDKIRRLESEAEISASNISQLEKVASDLEGRVQKLLEDSRSAENHKQELLQKILKLESDNQELLGRVQSVLNEKSNDTESLQGEIAKRDQQVETLENQVNQLCSIIDEKEQLHTCAVEREKNLEEQKLQVQASLAATESQLTEAKKQYDIMLEGKKIELSKHLKELSLKNDQAINEIRRKYELEKVEIINIEKEKAEKLIKEMENKCNEKISENRQDSERYLMCLKEEHGSMVARIQQDNEHKESTLRAYHKEELQRIQSQAENELRERLSSLRKDHEIQMKSLTKKHEENCQKLQDELELQKSKEEKQRALLQLQWKVMGETQQVDQEVNSKKEYSVSSIKRRDPYIRKEHQLQLVSPETKRKDVNLSGIIQSPITNMLRKVEKGTQDIPKHRKVTHHEYEVETANGRITKRRKTKSTVMFGEPNTQKSLHDTADKDPTKMKKVVAGSHPHPANIGELFSEGSLNPYAEDPYAFG.

Coiled coils occupy residues 64 to 298 (TDLE…SGFT), 330 to 614 (HEEK…SERY), and 641 to 713 (RAYH…WKVM). Residues 841 to 869 (GSHPHPANIGELFSEGSLNPYAEDPYAFG) are disordered.

As to quaternary structure, interacts with CRC1. Highly expressed in panicles.

Its subcellular location is the nucleus. The protein resides in the chromosome. Functionally, required for chromosome synapsis and regulates crossover frequency during meiosis. Acts as a transverse filament protein and constitutes the central element of the synaptonemal complex. The sequence is that of Synaptonemal complex protein ZEP1 (ZEP1) from Oryza sativa subsp. japonica (Rice).